The following is a 324-amino-acid chain: Glyoxylate/hydroxypyruvate reductase B (324 aa).

Catalysis depends on residues arginine 237 and glutamate 266. Residue histidine 285 is the Proton donor of the active site.

Belongs to the D-isomer specific 2-hydroxyacid dehydrogenase family. GhrB subfamily. As to quaternary structure, homodimer.

It localises to the cytoplasm. The enzyme catalyses glycolate + NADP(+) = glyoxylate + NADPH + H(+). The catalysed reaction is (R)-glycerate + NAD(+) = 3-hydroxypyruvate + NADH + H(+). It carries out the reaction (R)-glycerate + NADP(+) = 3-hydroxypyruvate + NADPH + H(+). In terms of biological role, catalyzes the NADPH-dependent reduction of glyoxylate and hydroxypyruvate into glycolate and glycerate, respectively. The sequence is that of Glyoxylate/hydroxypyruvate reductase B from Escherichia coli O6:K15:H31 (strain 536 / UPEC).